Consider the following 211-residue polypeptide: Imidazole glycerol phosphate synthase subunit HisH (211 aa).

A Glutamine amidotransferase type-1 domain is found at M1–M211. C79 serves as the catalytic Nucleophile. Active-site residues include H186 and E188.

Heterodimer of HisH and HisF.

The protein resides in the cytoplasm. The enzyme catalyses 5-[(5-phospho-1-deoxy-D-ribulos-1-ylimino)methylamino]-1-(5-phospho-beta-D-ribosyl)imidazole-4-carboxamide + L-glutamine = D-erythro-1-(imidazol-4-yl)glycerol 3-phosphate + 5-amino-1-(5-phospho-beta-D-ribosyl)imidazole-4-carboxamide + L-glutamate + H(+). It carries out the reaction L-glutamine + H2O = L-glutamate + NH4(+). Its pathway is amino-acid biosynthesis; L-histidine biosynthesis; L-histidine from 5-phospho-alpha-D-ribose 1-diphosphate: step 5/9. In terms of biological role, IGPS catalyzes the conversion of PRFAR and glutamine to IGP, AICAR and glutamate. The HisH subunit catalyzes the hydrolysis of glutamine to glutamate and ammonia as part of the synthesis of IGP and AICAR. The resulting ammonia molecule is channeled to the active site of HisF. The polypeptide is Imidazole glycerol phosphate synthase subunit HisH (Geobacillus sp. (strain WCH70)).